The sequence spans 340 residues: Glyceraldehyde-3-phosphate dehydrogenase (340 aa).

NAD(+) is bound by residues 13-14 (TI) and Gly-112. 141-143 (SCN) contacts D-glyceraldehyde 3-phosphate. Cys-142 (nucleophile) is an active-site residue. Arg-170 is an NAD(+) binding site. 196–197 (HG) is a binding site for D-glyceraldehyde 3-phosphate. Gln-302 serves as a coordination point for NAD(+).

It belongs to the glyceraldehyde-3-phosphate dehydrogenase family. Homotetramer.

The protein localises to the cytoplasm. The catalysed reaction is D-glyceraldehyde 3-phosphate + phosphate + NADP(+) = (2R)-3-phospho-glyceroyl phosphate + NADPH + H(+). It catalyses the reaction D-glyceraldehyde 3-phosphate + phosphate + NAD(+) = (2R)-3-phospho-glyceroyl phosphate + NADH + H(+). Its pathway is carbohydrate degradation; glycolysis; pyruvate from D-glyceraldehyde 3-phosphate: step 1/5. This Archaeoglobus fulgidus (strain ATCC 49558 / DSM 4304 / JCM 9628 / NBRC 100126 / VC-16) protein is Glyceraldehyde-3-phosphate dehydrogenase (gap).